Consider the following 303-residue polypeptide: UDP-3-O-acyl-N-acetylglucosamine deacetylase (303 aa).

Zn(2+) is bound by residues H78, H237, and D241. H264 functions as the Proton donor in the catalytic mechanism.

It belongs to the LpxC family. Requires Zn(2+) as cofactor.

The catalysed reaction is a UDP-3-O-[(3R)-3-hydroxyacyl]-N-acetyl-alpha-D-glucosamine + H2O = a UDP-3-O-[(3R)-3-hydroxyacyl]-alpha-D-glucosamine + acetate. The protein operates within glycolipid biosynthesis; lipid IV(A) biosynthesis; lipid IV(A) from (3R)-3-hydroxytetradecanoyl-[acyl-carrier-protein] and UDP-N-acetyl-alpha-D-glucosamine: step 2/6. Its function is as follows. Catalyzes the hydrolysis of UDP-3-O-myristoyl-N-acetylglucosamine to form UDP-3-O-myristoylglucosamine and acetate, the committed step in lipid A biosynthesis. This Coxiella burnetii (strain CbuG_Q212) (Coxiella burnetii (strain Q212)) protein is UDP-3-O-acyl-N-acetylglucosamine deacetylase.